The primary structure comprises 196 residues: Regulator of G-protein signaling 8 (196 aa).

Ser-26 bears the Phosphoserine mark. An RGS domain is found at 72–188 (SFDVLLSHKY…LRSKMYLDLL (117 aa)).

As to quaternary structure, interacts with GNAO1 and GNAI3.

Its subcellular location is the cell membrane. The protein resides in the membrane. It localises to the perikaryon. It is found in the cell projection. The protein localises to the dendrite. Its subcellular location is the nucleus. Regulates G protein-coupled receptor signaling cascades, including signaling via muscarinic acetylcholine receptor CHRM2 and dopamine receptor DRD2. Inhibits signal transduction by increasing the GTPase activity of G protein alpha subunits, thereby driving them into their inactive GDP-bound form. Modulates the activity of potassium channels that are activated in response to DRD2 and CHRM2 signaling. The polypeptide is Regulator of G-protein signaling 8 (RGS8) (Macaca fascicularis (Crab-eating macaque)).